The chain runs to 247 residues: Cementoblastoma-derived protein 1 (247 aa).

Polar residues predominate over residues 1–28 (MGTSSTDSQQAGHRRCSTSNTSAENLTC). Disordered regions lie at residues 1–52 (MGTS…AGQP) and 147–183 (EENS…EKVK).

In terms of processing, phosphorylated. N-glycosylated. Expressed by cementoblasts, a subpopulation of periodontal ligament cells and cells located around vessels in periodontium (at protein level).

It localises to the cytoplasm. It is found in the nucleus. Functionally, may play a role in development of the periodontium which surrounds and supports the teeth by promoting the differentiation of multi-potent cells from the periodontal ligament into cementoblasts to form the cementum. Binds hydroxyapatite and may promote the biomineralization of the cementum. Also promotes cell proliferation. In Homo sapiens (Human), this protein is Cementoblastoma-derived protein 1.